The following is a 570-amino-acid chain: MFS-type transporter ptmT (570 aa).

The span at 1–11 (MPDSGNIQLDT) shows a compositional bias: polar residues. The tract at residues 1 to 34 (MPDSGNIQLDTLQHKDHSQETTSHYEGGSQLPEQ) is disordered. The next 14 helical transmembrane spans lie at 50-70 (GLIR…CVGL), 94-114 (WYVS…GKIY), 121-141 (WTYL…AITP), 151-171 (AISG…LSNI), 182-202 (AFIG…GGVF), 210-230 (WCFY…FLFM), 247-267 (GLDW…LLAL), 278-298 (NVRI…WLLI), 323-343 (IYTI…PIWF), 356-376 (IMNL…SVLI), 379-399 (VGYM…GAGL), 413-433 (IGYQ…PLLV), 445-465 (VATA…SAIA), and 517-537 (VTHT…GAFI). N-linked (GlcNAc...) asparagine glycosylation is present at Asn-541. Residues 550-570 (PEPLVPGGSHSGAERDSKNGT) are disordered. The span at 561 to 570 (GAERDSKNGT) shows a compositional bias: basic and acidic residues.

It belongs to the major facilitator superfamily. TCR/Tet family.

Its subcellular location is the cell membrane. MFS-type transporter; part of the gene cluster that mediates the biosynthesis of the indole diterpenes penitrems. May be involved in the efflux of penitrems. This chain is MFS-type transporter ptmT, found in Penicillium ochrochloron.